The chain runs to 230 residues: Biosynthetic peptidoglycan transglycosylase (230 aa).

The chain crosses the membrane as a helical span at residues 11–31 (VLLVLVALFVLYQLWIFTLVL).

It belongs to the glycosyltransferase 51 family.

The protein localises to the cell inner membrane. The catalysed reaction is [GlcNAc-(1-&gt;4)-Mur2Ac(oyl-L-Ala-gamma-D-Glu-L-Lys-D-Ala-D-Ala)](n)-di-trans,octa-cis-undecaprenyl diphosphate + beta-D-GlcNAc-(1-&gt;4)-Mur2Ac(oyl-L-Ala-gamma-D-Glu-L-Lys-D-Ala-D-Ala)-di-trans,octa-cis-undecaprenyl diphosphate = [GlcNAc-(1-&gt;4)-Mur2Ac(oyl-L-Ala-gamma-D-Glu-L-Lys-D-Ala-D-Ala)](n+1)-di-trans,octa-cis-undecaprenyl diphosphate + di-trans,octa-cis-undecaprenyl diphosphate + H(+). The protein operates within cell wall biogenesis; peptidoglycan biosynthesis. Its function is as follows. Peptidoglycan polymerase that catalyzes glycan chain elongation from lipid-linked precursors. In Aromatoleum aromaticum (strain DSM 19018 / LMG 30748 / EbN1) (Azoarcus sp. (strain EbN1)), this protein is Biosynthetic peptidoglycan transglycosylase.